The following is a 304-amino-acid chain: uncharacterized protein (304 aa).

The span at 1 to 10 (MLWAHRKKRK) shows a compositional bias: basic residues. The segment at 1–28 (MLWAHRKKRKAATETTEDKPLESHRAND) is disordered. Residues 16–27 (TEDKPLESHRAN) show a composition bias toward basic and acidic residues. Phosphoserine is present on serine 39. Residues 91–101 (KQKISGSSMTK) show a composition bias toward polar residues. 3 disordered regions span residues 91 to 115 (KQKI…SMED), 138 to 160 (SMLQ…ISPE), and 190 to 304 (SHTV…IYGS). The segment covering 151–160 (HAESRNISPE) has biased composition (basic and acidic residues). Serine 158 carries the post-translational modification Phosphoserine. The segment covering 195–206 (SQSRHSNQSHHS) has biased composition (low complexity). Over residues 208–223 (PSHQSNQSHPVYSSYQ) the composition is skewed to polar residues. The span at 229–248 (HLSPQSYPSYSSHQSHPGHS) shows a compositional bias: low complexity. Polar residues predominate over residues 249–263 (NHQGHSGLSSHQTHL). Residues 264 to 292 (GHSNHQGHPGHSSHQSHQGQPGHPSHQSH) are compositionally biased toward low complexity.

This is an uncharacterized protein from Mus musculus (Mouse).